Here is a 480-residue protein sequence, read N- to C-terminus: Probable cytosol aminopeptidase (480 aa).

K248 and D253 together coordinate Mn(2+). K260 is an active-site residue. The Mn(2+) site is built by D271, D330, and E332. R334 is an active-site residue.

This sequence belongs to the peptidase M17 family. Mn(2+) serves as cofactor.

It is found in the cytoplasm. The catalysed reaction is Release of an N-terminal amino acid, Xaa-|-Yaa-, in which Xaa is preferably Leu, but may be other amino acids including Pro although not Arg or Lys, and Yaa may be Pro. Amino acid amides and methyl esters are also readily hydrolyzed, but rates on arylamides are exceedingly low.. It catalyses the reaction Release of an N-terminal amino acid, preferentially leucine, but not glutamic or aspartic acids.. In terms of biological role, presumably involved in the processing and regular turnover of intracellular proteins. Catalyzes the removal of unsubstituted N-terminal amino acids from various peptides. This chain is Probable cytosol aminopeptidase, found in Solibacter usitatus (strain Ellin6076).